An 833-amino-acid polypeptide reads, in one-letter code: Translation initiation factor IF-2 (833 aa).

Residues 1 to 247 (MTEDVKKADG…ALQQAFTKPA (247 aa)) form a disordered region. Composition is skewed to basic and acidic residues over residues 53–99 (QKAE…EAKK) and 110–152 (VDVE…RYAE). The segment covering 153–166 (LSEEDAENENSEDY) has biased composition (acidic residues). The span at 187–203 (KENRNRGGKNKVAKAKK) shows a compositional bias: basic residues. Over residues 204-227 (GGREDESSKTERESNRRNQKDGKM) the composition is skewed to basic and acidic residues. The tr-type G domain occupies 333-502 (TRAPVVTIMG…LLQSEVLELT (170 aa)). The G1 stretch occupies residues 342 to 349 (GHVDHGKT). 342 to 349 (GHVDHGKT) contacts GTP. The interval 367–371 (GITQH) is G2. The segment at 388–391 (DTPG) is G3. GTP-binding positions include 388–392 (DTPGH) and 442–445 (NKID). The interval 442–445 (NKID) is G4. Residues 478–480 (SAK) form a G5 region.

Belongs to the TRAFAC class translation factor GTPase superfamily. Classic translation factor GTPase family. IF-2 subfamily.

It localises to the cytoplasm. One of the essential components for the initiation of protein synthesis. Protects formylmethionyl-tRNA from spontaneous hydrolysis and promotes its binding to the 30S ribosomal subunits. Also involved in the hydrolysis of GTP during the formation of the 70S ribosomal complex. The protein is Translation initiation factor IF-2 (infB) of Pasteurella multocida (strain Pm70).